Reading from the N-terminus, the 221-residue chain is Stromal cell-derived factor 2-like protein 1 (221 aa).

The N-terminal stretch at 1–28 is a signal peptide; that stretch reads MWSAGSGRAAGPALLGILLALSLSGGRA. MIR domains lie at 33–87, 95–150, and 151–205; these read AGLV…IRGG, GSPV…VRCS, and GQHW…AMEG. A Prevents secretion from ER motif is present at residues 218–221; the sequence is HDEL.

The protein localises to the endoplasmic reticulum lumen. This is Stromal cell-derived factor 2-like protein 1 (SDF2L1) from Bos taurus (Bovine).